We begin with the raw amino-acid sequence, 295 residues long: Probable alpha-L-glutamate ligase 1 (295 aa).

The 184-residue stretch at 104 to 287 folds into the ATP-grasp domain; the sequence is MQLLSRKGIG…VANAIIEFIE (184 aa). ATP-binding positions include Lys141, 178-179, Asp187, and 211-213; these read EY and RSN. Mg(2+) contacts are provided by Asp248, Glu260, and Asn262. Mn(2+) contacts are provided by Asp248, Glu260, and Asn262.

This sequence belongs to the RimK family. The cofactor is Mg(2+). It depends on Mn(2+) as a cofactor.

This chain is Probable alpha-L-glutamate ligase 1, found in Shewanella denitrificans (strain OS217 / ATCC BAA-1090 / DSM 15013).